Consider the following 254-residue polypeptide: Long form salivary protein D7LC (254 aa).

Positions 1–19 (MNAVITSLLFLSLVGLGYS) are cleaved as a signal peptide. 2 disulfides stabilise this stretch: C36–C66 and C62–C112. W49 lines the thromboxane A2 pocket. W52 serves as a coordination point for leukotriene C4. Position 63 (Y63) interacts with thromboxane A2. Leukotriene C4 is bound by residues G136 and K154. Residue K154 participates in thromboxane A2 binding. 3 cysteine pairs are disulfide-bonded: C162-C178, C174-C221, and C211-C230.

Belongs to the PBP/GOBP family.

The protein resides in the secreted. In terms of biological role, modulates blood feeding of female sandflies on vertebrate species by binding and sequestering different mediators involved in the host response. Binds leukotriene C4, leukotriene D4, leukotriene E4 and U-46619, a stable analog of thromboxane A2. Does not bind histamine or serotonin. Inhibits platelet aggregation induced by low concentrations of collagen in thromboxane A2-dependent manner. The sequence is that of Long form salivary protein D7LC from Phlebotomus papatasi (Sandfly).